The primary structure comprises 57 residues: uncharacterized protein (57 aa).

A disordered region spans residues 26 to 57; it reads VVSTRKRLKQNTNTPPHYDTSEDEDEDNYYNY. Residues 46–57 are compositionally biased toward acidic residues; that stretch reads SEDEDEDNYYNY.

This is an uncharacterized protein from Autographa californica nuclear polyhedrosis virus (AcMNPV).